We begin with the raw amino-acid sequence, 550 residues long: Medium/long-chain-fatty-acid--CoA/3-oxocholest-4-en-26-oate--CoA ligase (550 aa).

Residues 178-186 (TGGTTGFPK), D419, R434, and K525 each bind ATP. Residues 525–550 (KPDYRWAKEQTEARPADDVHAAHVSA) are disordered.

It belongs to the ATP-dependent AMP-binding enzyme family.

It catalyses the reaction a medium-chain fatty acid + ATP + CoA = a medium-chain fatty acyl-CoA + AMP + diphosphate. It carries out the reaction a long-chain fatty acid + ATP + CoA = a long-chain fatty acyl-CoA + AMP + diphosphate. The enzyme catalyses (25S)-3-oxocholest-4-en-26-oate + ATP + CoA = (25S)-3-oxocholest-4-en-26-oyl-CoA + AMP + diphosphate. It participates in lipid metabolism; fatty acid biosynthesis. It functions in the pathway steroid metabolism; cholesterol metabolism. Its function is as follows. Catalyzes the activation of medium/long-chain fatty acids as acyl-coenzyme A (acyl-CoA), which are then transferred to the multifunctional polyketide synthase (PKS) type III for further chain extension. Also involved in the degradation of cholesterol via the degradation of the side chains of C-24 branched-chain sterols. Catalyzes the ATP-dependent CoA thioesterification of the sterol 3-oxocholest-4-en-26-oate to yield 3-oxocholest-4-en-26-oyl-CoA. The chain is Medium/long-chain-fatty-acid--CoA/3-oxocholest-4-en-26-oate--CoA ligase from Mycobacterium marinum (strain ATCC BAA-535 / M).